We begin with the raw amino-acid sequence, 205 residues long: MTKRAEAKYKIDRRMGQNIWGRPKSPVNRREYGPGQHGQRRKGKLSDFGVQLRAKQKLKGYYANISERQFHAIYVEATRLKGDSGENLIGLLERRLDAVVYRAKFVSTMFAARQFINHGHIKVNGKRVNIPSYKVRVGDVIEVKEASKQLAFVLEASQLAERDVPDYIEVDHNKMTAKFARIPALSDVPFAVQMEPHLIVEFYSR.

Positions 19–45 are disordered; it reads IWGRPKSPVNRREYGPGQHGQRRKGKL. Residues 94-157 form the S4 RNA-binding domain; that stretch reads RRLDAVVYRA…KQLAFVLEAS (64 aa).

In terms of assembly, part of the 30S ribosomal subunit. Contacts protein S5. The interaction surface between S4 and S5 is involved in control of translational fidelity. May be methylated on an undetermined residue.

In terms of biological role, one of the primary rRNA binding proteins, it binds directly to 16S rRNA where it nucleates assembly of the body of the 30S subunit. Functionally, with S5 and S12 plays an important role in translational accuracy. The sequence is that of Small ribosomal subunit protein uS4 from Rhodopseudomonas palustris (strain ATCC BAA-98 / CGA009).